The chain runs to 459 residues: tRNA-guanine(15) transglycosylase (459 aa).

The active-site Nucleophile is Asp90. 2 residues coordinate substrate: Asp125 and Gly192. Zn(2+)-binding residues include Cys275, Cys277, and Cys280.

Belongs to the archaeosine tRNA-ribosyltransferase family. Requires Zn(2+) as cofactor.

It carries out the reaction guanosine(15) in tRNA + 7-cyano-7-deazaguanine = 7-cyano-7-carbaguanosine(15) in tRNA + guanine. It participates in tRNA modification; archaeosine-tRNA biosynthesis. Its function is as follows. Exchanges the guanine residue with 7-cyano-7-deazaguanine (preQ0) at position 15 in the dihydrouridine loop (D-loop) of archaeal tRNAs. The protein is tRNA-guanine(15) transglycosylase of Methanopyrus kandleri (strain AV19 / DSM 6324 / JCM 9639 / NBRC 100938).